We begin with the raw amino-acid sequence, 344 residues long: Flavonoid 7-O-methyltransferase 1B (344 aa).

Asp211 contributes to the S-adenosyl-L-methionine binding site. Residue His249 is the Proton acceptor of the active site.

It belongs to the class I-like SAM-binding methyltransferase superfamily. Cation-independent O-methyltransferase family. Homodimer.

It catalyses the reaction scutellarein + S-adenosyl-L-methionine = scutellarein 7-methyl ether + S-adenosyl-L-homocysteine. It carries out the reaction 4',7,8-trihydroxyflavone + S-adenosyl-L-methionine = 4',8-dihydroxy-7-methoxyflavone + S-adenosyl-L-homocysteine. The enzyme catalyses isorhamnetin + S-adenosyl-L-methionine = rhamnacene + S-adenosyl-L-homocysteine + H(+). The catalysed reaction is kaempferol + S-adenosyl-L-methionine = kaempferol 7-methyl ether + S-adenosyl-L-homocysteine + H(+). It catalyses the reaction (2S)-naringenin + S-adenosyl-L-methionine = (2S)-sakuranetin + S-adenosyl-L-homocysteine + H(+). It carries out the reaction quercetin + S-adenosyl-L-methionine = rhamnetin + S-adenosyl-L-homocysteine + H(+). The enzyme catalyses apigenin + S-adenosyl-L-methionine = genkwanin + S-adenosyl-L-homocysteine + H(+). The catalysed reaction is luteolin + S-adenosyl-L-methionine = luteolin 7-methyl ether + S-adenosyl-L-homocysteine + H(+). The protein operates within flavonoid metabolism. Flavonoid 7-O-methyltransferase involved in the biosynthesis of polymethoxylated flavonoids natural products such as pebrellin, aroma compounds which contribute to the flavor of peppermint, and exhibit pharmacological activities such as anti-allergic, anti-oxidant, antibacterial, anti-proliferative, and anti-inflammatory effects. Catalyzes S-adenosylmethionine-dependent regioselective 7-O-methylation of flavonoids; active on various hydroxylated flavonoid substrates, including luteolin (LUT), quercetin, kaempferol, isorhamnetin, apigenin (API), scutellarein (6-hydroxy-apigenin, 6-OH-API, SCU), 7,8,4'-trihydroxy-flavone and naringenin (NAR), and, with a lower efficiency, 7,8,3',4'-tetrahydroxy-flavone, taxifolin and hesperetin. The polypeptide is Flavonoid 7-O-methyltransferase 1B (Mentha piperita (Peppermint)).